The primary structure comprises 175 residues: Alpha-crystallin B chain (175 aa).

Residue M1 is modified to N-acetylmethionine. Phosphoserine occurs at positions 19, 45, and 59. Positions 56–164 (RAPSWIDTGL…PERTIPITRE (109 aa)) constitute a sHSP domain. H83 serves as a coordination point for Zn(2+). K92 is modified (N6-acetyllysine). The Zn(2+) site is built by H104, E106, H111, and H119. The disordered stretch occupies residues 145-175 (VNGPRKQASGPERTIPITREEKPAVTAAPKK). At K166 the chain carries N6-acetyllysine. An O-linked (GlcNAc) threonine glycan is attached at T170.

It belongs to the small heat shock protein (HSP20) family. Heteromer composed of three CRYAA and one CRYAB subunits. Aggregates with homologous proteins, including the small heat shock protein HSPB1, to form large heteromeric complexes. Inter-subunit bridging via zinc ions enhances stability, which is crucial as there is no protein turn over in the lens. Interacts with HSPBAP1 and TTN/titin. Interacts with TMEM109; in the cellular response to DNA damage. Interacts with DES; binds rapidly during early stages of DES filament assembly and a reduced binding seen in the later stages. Interacts with TMED10; the interaction mediates the translocation from the cytoplasm into the ERGIC (endoplasmic reticulum-Golgi intermediate compartment) and thereby secretion. Interacts with ATP6V1A and with MTOR, forming a ternary complex. In terms of tissue distribution, lens as well as other tissues.

It is found in the cytoplasm. The protein resides in the nucleus. The protein localises to the secreted. Its subcellular location is the lysosome. May contribute to the transparency and refractive index of the lens. Has chaperone-like activity, preventing aggregation of various proteins under a wide range of stress conditions. In lens epithelial cells, stabilizes the ATP6V1A protein, preventing its degradation by the proteasome. The polypeptide is Alpha-crystallin B chain (CRYAB) (Mesocricetus auratus (Golden hamster)).